A 292-amino-acid chain; its full sequence is Retinal homeobox protein Rx3 (292 aa).

Residues methionine 1–serine 27 form a disordered region. Positions histidine 32–glycine 39 match the Octapeptide motif motif. Disordered regions lie at residues glycine 53–lysine 72 and serine 85–arginine 107. Composition is skewed to basic and acidic residues over residues threonine 57–lysine 72 and aspartate 92–proline 102. A DNA-binding region (homeobox) is located at residues histidine 106–glutamate 165. An OAR motif is present at residues threonine 272–isoleucine 285. The Nuclear localization signal motif lies at arginine 278–lysine 282.

The protein belongs to the paired homeobox family. Bicoid subfamily.

It localises to the nucleus. Functionally, plays a critical role in eye formation by regulating the initial specification of retinal cells and/or their subsequent proliferation. The polypeptide is Retinal homeobox protein Rx3 (rx3) (Danio rerio (Zebrafish)).